Reading from the N-terminus, the 396-residue chain is Cytochrome b (396 aa).

Helical transmembrane passes span 37 to 57, 81 to 102, 117 to 137, and 182 to 202; these read FGSLLSLCLILQIITGLILAM, WLMRNLHANGASMFFICIYAHI, WNVGVILFALTAATAFVGYVL, and FFTFHFILPFILAAMTMIHIM. The heme b site is built by His87 and His101. Residues His186 and His200 each coordinate heme b. His205 lines the a ubiquinone pocket. 4 helical membrane-spanning segments follow: residues 230 to 250, 292 to 312, 324 to 344, and 351 to 371; these read FKDILGFVILLGILFMISLLA, LGGVVALAAAIMILLIIPFTH, LAQITFWILIADLALLTWLGG, and FILMTQIASTVYFMIFILVFP.

The protein belongs to the cytochrome b family. As to quaternary structure, the cytochrome bc1 complex contains 3 respiratory subunits (MT-CYB, CYC1 and UQCRFS1), 2 core proteins (UQCRC1 and UQCRC2) and probably 6 low-molecular weight proteins. Requires heme b as cofactor.

It is found in the mitochondrion inner membrane. Functionally, component of the ubiquinol-cytochrome c reductase complex (complex III or cytochrome b-c1 complex) that is part of the mitochondrial respiratory chain. The b-c1 complex mediates electron transfer from ubiquinol to cytochrome c. Contributes to the generation of a proton gradient across the mitochondrial membrane that is then used for ATP synthesis. This chain is Cytochrome b (mt-cyb), found in Petromyzon marinus (Sea lamprey).